The following is a 59-amino-acid chain: Large ribosomal subunit protein bL32 (59 aa).

A disordered region spans residues 1–59 (MAVQQNKKSPSKRGMHRSHDFLTTSPLAVEPSTGEVHLRHHISPNGYYRGKKVVKTKND). Residues 49 to 59 (RGKKVVKTKND) show a composition bias toward basic residues.

The protein belongs to the bacterial ribosomal protein bL32 family.

In Burkholderia mallei (strain NCTC 10247), this protein is Large ribosomal subunit protein bL32.